The sequence spans 152 residues: Transcriptional repressor NrdR (152 aa).

A zinc finger spans residues 3-34 (CPFCNHGELKVIDSRNAPEANAIKRRRECLNC). Positions 48-138 (LQVLKRDGRY…VYRRFKDVGE (91 aa)) constitute an ATP-cone domain.

The protein belongs to the NrdR family. Zn(2+) serves as cofactor.

Functionally, negatively regulates transcription of bacterial ribonucleotide reductase nrd genes and operons by binding to NrdR-boxes. This chain is Transcriptional repressor NrdR, found in Chlamydia abortus (strain DSM 27085 / S26/3) (Chlamydophila abortus).